A 584-amino-acid polypeptide reads, in one-letter code: Interferon regulatory factor 2-binding protein 1 (584 aa).

Positions 59–120 are disordered; the sequence is HVLPEGRSPG…RYDRATSSSR (62 aa). Ser-66 is subject to Phosphoserine. Residues 82-100 are compositionally biased toward low complexity; sequence STGSQGSQLPPPQAQAQPS. Ser-125 carries the post-translational modification Phosphoserine. An Omega-N-methylarginine modification is found at Arg-177. Ser-186 carries the phosphoserine modification. Positions 197–217 form a coiled coil; that stretch reads EKEKQQRNADCLAELNEAMRG. Lys-227 participates in a covalent cross-link: Glycyl lysine isopeptide (Lys-Gly) (interchain with G-Cter in SUMO2). Disordered regions lie at residues 346-421 and 433-495; these read PAEA…GVPS and LGHS…GTGA. The span at 354–369 shows a compositional bias: pro residues; that stretch reads YPEPAPAALCGPPPRA. Phosphoserine occurs at positions 371, 384, 421, and 436. Lys-438 is covalently cross-linked (Glycyl lysine isopeptide (Lys-Gly) (interchain with G-Cter in SUMO2)). Over residues 449–458 the composition is skewed to low complexity; it reads AGGASPAASS. 2 positions are modified to phosphoserine: Ser-453 and Ser-457. An RING-type; degenerate zinc finger spans residues 503-550; that stretch reads CTLCRERLEDTHFVQCPSVPGHKFCFPCSREFIKAQGPAGEVYCPSGD. The segment at 503–550 is cys-rich; that stretch reads CTLCRERLEDTHFVQCPSVPGHKFCFPCSREFIKAQGPAGEVYCPSGD.

Belongs to the IRF2BP family. In terms of assembly, interacts with IRF2. Part of a corepressor complex containing IRF2 and IRF2BP2. Interacts with JDP2.

The protein resides in the nucleus. It carries out the reaction S-ubiquitinyl-[E2 ubiquitin-conjugating enzyme]-L-cysteine + [acceptor protein]-L-lysine = [E2 ubiquitin-conjugating enzyme]-L-cysteine + N(6)-ubiquitinyl-[acceptor protein]-L-lysine.. Its function is as follows. Acts as a transcriptional corepressor in a IRF2-dependent manner; this repression is not mediated by histone deacetylase activities. May act as an E3 ligase towards JDP2, enhancing its polyubiquitination. Represses ATF2-dependent transcriptional activation. The sequence is that of Interferon regulatory factor 2-binding protein 1 (Irf2bp1) from Mus musculus (Mouse).